The sequence spans 473 residues: Nuclear distribution protein PAC1 (473 aa).

Positions 9-41 (QAEELHKSIIAYFLSAKLPKSAAALREEIADSV) constitute a LisH domain. Positions 60–87 (TSVVRLQKKIMDLEARNSALQSELDSAT) form a coiled coil. Over residues 80–93 (QSELDSATPTSLSR) the composition is skewed to polar residues. Positions 80–99 (QSELDSATPTSLSRRNQDPV) are disordered. WD repeat units follow at residues 113–154 (SHRN…RTIK), 156–196 (HTRA…KNIR), 200–247 (GHDH…CVRT), 250–289 (GHVE…TKST), 292–352 (GHEH…IKTL), 354–393 (GHDN…KCVR), 397–434 (DAHA…ALSG), and 435–472 (VNGI…RVFA).

Belongs to the WD repeat LIS1/nudF family. As to quaternary structure, self-associates. Interacts with NDL1 and dynein.

Its subcellular location is the cytoplasm. It localises to the cytoskeleton. It is found in the spindle pole. Positively regulates the activity of the minus-end directed microtubule motor protein dynein. May enhance dynein-mediated microtubule sliding by targeting dynein to the microtubule plus end. Required for nuclear migration during vegetative growth as well as development. Required for retrograde early endosome (EE) transport from the hyphal tip. Required for localization of dynein to the mitotic spindle poles. Recruits additional proteins to the dynein complex at SPBs. This is Nuclear distribution protein PAC1 from Ajellomyces dermatitidis (strain ER-3 / ATCC MYA-2586) (Blastomyces dermatitidis).